Consider the following 40-residue polypeptide: Light-harvesting protein B800/830/1020 beta-1 chain (40 aa).

Residues 1 to 20 are Cytoplasmic-facing; the sequence is ANDIRPLRDFEDEEAQEFHQ. A bacteriochlorophyll contacts are provided by histidine 19 and histidine 37. Residues 21–40 form a helical membrane-spanning segment; that stretch reads AAVQAFFLYVAVAFVAHLPV.

This sequence belongs to the antenna complex beta subunit family. As to quaternary structure, the core complex is formed by different alpha and beta chains, binding bacteriochlorophyll molecules, and arranged most probably in tetrameric structures disposed around the reaction center. The non-pigmented gamma chains may constitute additional components.

The protein resides in the cell inner membrane. Antenna complexes are light-harvesting systems, which transfer the excitation energy to the reaction centers. The sequence is that of Light-harvesting protein B800/830/1020 beta-1 chain from Halorhodospira halochloris (Ectothiorhodospira halochloris).